We begin with the raw amino-acid sequence, 624 residues long: Bifunctional protein ArgH (624 aa).

The tract at residues 1-466 (MALWGGRFTQ…AARDTTLVKV (466 aa)) is argininosuccinate lyase. An N-acetyltransferase domain is found at 464–614 (VKVRPARITD…DEVALEFNLS (151 aa)). The probable acetyltransferase stretch occupies residues 467 to 624 (RPARITDIET…EQIISQVKVA (158 aa)).

It in the N-terminal section; belongs to the lyase 1 family. Argininosuccinate lyase subfamily.

It is found in the cytoplasm. The enzyme catalyses 2-(N(omega)-L-arginino)succinate = fumarate + L-arginine. It functions in the pathway amino-acid biosynthesis; L-arginine biosynthesis; L-arginine from L-ornithine and carbamoyl phosphate: step 3/3. The chain is Bifunctional protein ArgH (argH) from Vibrio vulnificus (strain CMCP6).